The following is a 398-amino-acid chain: Acetate kinase 2 (398 aa).

Asn7 provides a ligand contact to Mg(2+). Lys14 is an ATP binding site. Arg91 lines the substrate pocket. Asp148 functions as the Proton donor/acceptor in the catalytic mechanism. Residues His208 to Gly212, Asp283 to Arg285, and Gly331 to Asn335 contribute to the ATP site. Glu384 contacts Mg(2+).

Belongs to the acetokinase family. As to quaternary structure, homodimer. Requires Mg(2+) as cofactor. Mn(2+) serves as cofactor.

Its subcellular location is the cytoplasm. The enzyme catalyses acetate + ATP = acetyl phosphate + ADP. The protein operates within metabolic intermediate biosynthesis; acetyl-CoA biosynthesis; acetyl-CoA from acetate: step 1/2. Catalyzes the formation of acetyl phosphate from acetate and ATP. Can also catalyze the reverse reaction. In Clostridium perfringens (strain 13 / Type A), this protein is Acetate kinase 2.